Here is a 101-residue protein sequence, read N- to C-terminus: MSDMCDVVSFVGAAERVLRARFRPSPESGPPVHARRCGWSLGISAETLRRWAGQAEVDSGVVAGVSASRSGSVKTSELEQTIEILKVATSFFARKCDPRHR.

This is an uncharacterized protein from Mycobacterium tuberculosis (strain CDC 1551 / Oshkosh).